The chain runs to 446 residues: 23S rRNA (uracil(1939)-C(5))-methyltransferase RlmD (446 aa).

In terms of domain architecture, TRAM spans Lys-6–Glu-64. [4Fe-4S] cluster is bound by residues Cys-77, Cys-83, Cys-86, and Cys-165. The S-adenosyl-L-methionine site is built by Gln-275, Phe-304, Asn-309, Glu-325, Asp-352, and Asp-377. Cys-403 functions as the Nucleophile in the catalytic mechanism.

The protein belongs to the class I-like SAM-binding methyltransferase superfamily. RNA M5U methyltransferase family. RlmD subfamily.

It carries out the reaction uridine(1939) in 23S rRNA + S-adenosyl-L-methionine = 5-methyluridine(1939) in 23S rRNA + S-adenosyl-L-homocysteine + H(+). Its function is as follows. Catalyzes the formation of 5-methyl-uridine at position 1939 (m5U1939) in 23S rRNA. The polypeptide is 23S rRNA (uracil(1939)-C(5))-methyltransferase RlmD (Hahella chejuensis (strain KCTC 2396)).